The primary structure comprises 529 residues: MADSAGLDQPEPSPRPVLVVDFGAQYAQLIARRVREARVFSEVIPHTTSIEEITARDPLAIVLSGGPASVYTEGAPQLDPALFDLGLPVFGICYGFQAMAQVLGGTVARTKTSEYGRTELKVLGGDLHSGLPGVQPVWMSHGDAVTAAPDGFDVAASSSGAPVAAFENRDRRLAGVQYHPEVMHTPHGQQVLSRFLHDFAGLDADWTAANIAGVLVEQVRAQIGNGHAICGLSGGVDSAVAAALVQRAIGDRLTCIFVDHGLLRDGERGQVQRDFVAATGAKLVTVDAAETFLQALSGVTNPEGKRKIIGRQFIRAFEGAVRDLLGDSTFDSGIEFLVQGTLYPDVVESGGGSGTANIKSHHNVGGLPDNLRFKLVEPLRLLFKDEVRAVGRQLDLPEEIVARQPFPGPGLGIRIVGEVTAERLDTLRRADSIAREELTTAGLDYQIWQCPVVLLADVRSVGVQGDNRSYGHPIVLRPVSSEDAMTADWTWVPYEVLECISTRITNEVAEVNRVVLDITNKPPGTIEWE.

The Glutamine amidotransferase type-1 domain occupies 16–205; sequence PVLVVDFGAQ…LHDFAGLDAD (190 aa). Cysteine 93 acts as the Nucleophile in catalysis. Residues histidine 179 and glutamate 181 contribute to the active site. The GMPS ATP-PPase domain occupies 206–403; sequence WTAANIAGVL…LDLPEEIVAR (198 aa). 233–239 contributes to the ATP binding site; the sequence is SGGVDSA.

Homodimer.

It carries out the reaction XMP + L-glutamine + ATP + H2O = GMP + L-glutamate + AMP + diphosphate + 2 H(+). It participates in purine metabolism; GMP biosynthesis; GMP from XMP (L-Gln route): step 1/1. Functionally, catalyzes the synthesis of GMP from XMP. This chain is GMP synthase [glutamine-hydrolyzing], found in Mycobacterium leprae (strain Br4923).